The chain runs to 97 residues: Large ribosomal subunit protein bL31B (97 aa).

The protein belongs to the bacterial ribosomal protein bL31 family. Type B subfamily. In terms of assembly, part of the 50S ribosomal subunit.

The chain is Large ribosomal subunit protein bL31B (rpmE2) from Mycolicibacterium paratuberculosis (strain ATCC BAA-968 / K-10) (Mycobacterium paratuberculosis).